The primary structure comprises 799 residues: Armadillo repeat-containing protein wrm-1 (799 aa).

Residues 1-10 (MEERGPDIEK) are compositionally biased toward basic and acidic residues. The disordered stretch occupies residues 1–60 (MEERGPDIEKYGSQPCTPLSFDPMLPSTSRVATPVRPSSTLSARQAPASPFRAQPQNMEP). Over residues 26–43 (PSTSRVATPVRPSSTLSA) the composition is skewed to polar residues. The stretch at 454 to 496 (ESIRRVIQVVGSDDATIAERATGVLRNIGQPNKQNKVIMVRNG) is one ARM repeat.

As to quaternary structure, interacts (independently of ARM repeat) with nhr-25. Component of the beta-catenin-lit-1 complex (also called the lit-1/wrm-1 complex or the wrm-1/lit-1 kinase complex) at least composed of lit-1 and wrm-1. Interacts (via N-terminus) with lit-1; the interaction is direct and activates lit-1 kinase activity which leads to the phosphorylation of pop-1. This promotes pop-1 interaction with par-5 and translocation of pop-1 from the nucleus to the cytoplasm.

It is found in the cytoplasm. The protein resides in the cell cortex. Its subcellular location is the nucleus. In terms of biological role, antagonistic role in the Wnt signaling pathway that operates in embryogenesis. When located at the cortex it has been shown to inhibit Wnt signaling during asymmetric cell division but when relocated to the nucleus it shows positive regulation. Has a role in blastomere signaling during endoderm specification. Component of the beta-catenin-lit-1 complex which promotes phosphorylation, down-regulation and subcellular relocation of pop-1. Within the complex, activates lit-1-dependent kinase activity. Can substitute for bar-1 indicating functional redundancy. Appears to have a role in centrosome positioning. Involved in the development of distal tip cells (DTC) by regulating the asymmetric distribution of cye-1 and cki-1 between the daughters of Z1.a and Z4.p cells. This Caenorhabditis briggsae protein is Armadillo repeat-containing protein wrm-1.